A 134-amino-acid chain; its full sequence is DNA-binding protein H-NS homolog (134 aa).

The disordered stretch occupies residues 106–134 (HKTWTGQGRTPRPIQNALNKGKSLSDFEI). Residues 112 to 117 (QGRTPR) mediate DNA binding.

It belongs to the histone-like protein H-NS family. Homodimer that oligomerizes on DNA into higher-order complexes that form bridges between disparate regions of DNA compacting it.

It localises to the cytoplasm. The protein localises to the nucleoid. Its function is as follows. A DNA-binding protein implicated in transcriptional repression and chromosome organization and compaction. Binds nucleation sites in AT-rich DNA and bridges them, forming higher-order nucleoprotein complexes and condensing the chromosome. As many horizontally transferred genes are AT-rich, it plays a central role in silencing foreign genes. A subset of genes are repressed by H-NS in association with other proteins. This chain is DNA-binding protein H-NS homolog (hns), found in Haemophilus influenzae (strain ATCC 51907 / DSM 11121 / KW20 / Rd).